The following is a 296-amino-acid chain: Sulfotransferase 1C2 (296 aa).

49-54 (KAGTTW) is a 3'-phosphoadenylyl sulfate binding site. 107–109 (KTH) lines the substrate pocket. Residue histidine 109 is the Proton acceptor of the active site. Residues arginine 131, serine 139, tyrosine 194, and 228–233 (TSFEKM) each bind 3'-phosphoadenylyl sulfate. Serine 139 carries the phosphoserine modification. Serine 254 is modified (phosphoserine). 256-260 (FMRKG) contacts 3'-phosphoadenylyl sulfate.

Belongs to the sulfotransferase 1 family. In terms of tissue distribution, found in adult stomach, kidney and thyroid gland, and in fetal kidney and liver.

Its subcellular location is the cytoplasm. The protein resides in the lysosome. It localises to the mitochondrion. It carries out the reaction a phenol + 3'-phosphoadenylyl sulfate = an aryl sulfate + adenosine 3',5'-bisphosphate + H(+). The enzyme catalyses cholesterol + 3'-phosphoadenylyl sulfate = cholesterol sulfate + adenosine 3',5'-bisphosphate + H(+). In terms of biological role, sulfotransferase that utilizes 3'-phospho-5'-adenylyl sulfate (PAPS) to catalyze the sulfate conjugation of phenolic compounds. Does not transfer sulfate to steroids, dopamine, acetaminophen, or alpha-naphthol. Except in mitochondria, where it can add sulfate to cholesterol producing cholesterol sulfate, which alters mitochondrial membrane organization, and impacts protein complex mobility increasing state-III respiration, thereby modulating mitochondrial respiration. Catalyzes the sulfation of the carcinogenic N-hydroxy-2-acetylaminofluorene leading to highly reactive intermediates capable of forming DNA adducts, potentially resulting in mutagenesis. The protein is Sulfotransferase 1C2 (SULT1C2) of Homo sapiens (Human).